The primary structure comprises 212 residues: Uracil phosphoribosyltransferase (212 aa).

Residues Arg78, Arg103, and Asp130–Ser138 contribute to the 5-phospho-alpha-D-ribose 1-diphosphate site. Uracil-binding positions include Ile193 and Gly198–Ala200. Asp199 lines the 5-phospho-alpha-D-ribose 1-diphosphate pocket.

This sequence belongs to the UPRTase family. Requires Mg(2+) as cofactor.

The enzyme catalyses UMP + diphosphate = 5-phospho-alpha-D-ribose 1-diphosphate + uracil. It participates in pyrimidine metabolism; UMP biosynthesis via salvage pathway; UMP from uracil: step 1/1. With respect to regulation, allosterically activated by GTP. In terms of biological role, catalyzes the conversion of uracil and 5-phospho-alpha-D-ribose 1-diphosphate (PRPP) to UMP and diphosphate. This is Uracil phosphoribosyltransferase from Pseudomonas fluorescens (strain SBW25).